The following is a 270-amino-acid chain: Methylthioribulose-1-phosphate dehydratase (270 aa).

A substrate-binding site is contributed by cysteine 122. Zn(2+) is bound by residues histidine 140 and histidine 142. Glutamate 165 serves as the catalytic Proton donor/acceptor. Histidine 230 is a Zn(2+) binding site.

It belongs to the aldolase class II family. MtnB subfamily. It depends on Zn(2+) as a cofactor.

It is found in the cytoplasm. The enzyme catalyses 5-(methylsulfanyl)-D-ribulose 1-phosphate = 5-methylsulfanyl-2,3-dioxopentyl phosphate + H2O. The protein operates within amino-acid biosynthesis; L-methionine biosynthesis via salvage pathway; L-methionine from S-methyl-5-thio-alpha-D-ribose 1-phosphate: step 2/6. In terms of biological role, catalyzes the dehydration of methylthioribulose-1-phosphate (MTRu-1-P) into 2,3-diketo-5-methylthiopentyl-1-phosphate (DK-MTP-1-P). This chain is Methylthioribulose-1-phosphate dehydratase, found in Candida albicans (strain WO-1) (Yeast).